We begin with the raw amino-acid sequence, 355 residues long: Daphnetin O-methyltransferase 1 (355 aa).

D222, D242, and K256 together coordinate S-adenosyl-L-homocysteine. H260 functions as the Proton acceptor in the catalytic mechanism.

The protein belongs to the class I-like SAM-binding methyltransferase superfamily. Cation-independent O-methyltransferase family. COMT subfamily.

It catalyses the reaction 7,8-dihydroxycoumarin + S-adenosyl-L-methionine = 7-hydroxy-8-methoxycoumarin + S-adenosyl-L-homocysteine + H(+). It functions in the pathway aromatic compound metabolism. It participates in secondary metabolite biosynthesis. O-methyltransferase involved in the biosynthesis of coumarins natural products such as daphnetin derivatives. Catalyzes specifically the methylation of daphnetin (7,8-dihydroxycoumarin) to produce hydrangetin (7-hydroxy-8-methoxycoumarin). Probably involved in acclimation to low temperature conditions. This chain is Daphnetin O-methyltransferase 1, found in Secale cereale (Rye).